We begin with the raw amino-acid sequence, 340 residues long: tRNA N6-adenosine threonylcarbamoyltransferase (340 aa).

Residues His-111 and His-115 each coordinate Fe cation. Substrate contacts are provided by residues 133–137, Asp-166, Gly-179, Asp-183, and Asn-272; that span reads VVSGG. Asp-300 is a binding site for Fe cation.

Belongs to the KAE1 / TsaD family. Fe(2+) serves as cofactor.

The protein localises to the cytoplasm. The catalysed reaction is L-threonylcarbamoyladenylate + adenosine(37) in tRNA = N(6)-L-threonylcarbamoyladenosine(37) in tRNA + AMP + H(+). Its function is as follows. Required for the formation of a threonylcarbamoyl group on adenosine at position 37 (t(6)A37) in tRNAs that read codons beginning with adenine. Is involved in the transfer of the threonylcarbamoyl moiety of threonylcarbamoyl-AMP (TC-AMP) to the N6 group of A37, together with TsaE and TsaB. TsaD likely plays a direct catalytic role in this reaction. The sequence is that of tRNA N6-adenosine threonylcarbamoyltransferase from Geobacter sulfurreducens (strain ATCC 51573 / DSM 12127 / PCA).